The following is a 262-amino-acid chain: Abhydrolase domain-containing protein ACTT2 (262 aa).

The Peroxisomal targeting signal type 1 signature appears at 260-262 (SKL).

It belongs to the AB hydrolase superfamily. AKT2 hydrolase family.

The protein resides in the peroxisome. Its pathway is mycotoxin biosynthesis. Abhydrolase domain-containing protein; part of the gene clusters that mediate the biosynthesis of the host-selective toxins (HSTs) ACT-toxins responsible for brown spot of tangerine disease by the tangerine pathotype which affects tangerines and mandarins. ACT-toxins consist of three moieties, 9,10-epoxy-8-hydroxy-9-methyl-decatrienoic acid (EDA), valine and a polyketide. ACT-toxin I is toxic to both citrus and pear; toxin II the 5''-deoxy derivative of ACT-toxin I, is highly toxic to pear and slightly toxic to citrus. On cellular level, ACT-toxins affect plasma membrane of susceptible cells and cause a sudden increase in loss of K(+) after a few minutes of toxin treatment. The acyl-CoA ligase ACTT1, the hydrolase ACTT2, the enoyl-CoA hydratases ACTT3 and ACTT6, and the acyl-CoA synthetase ACTT5 are all involved in the biosynthesis of the AK-, AF- and ACT-toxin common 9,10-epoxy-8-hydroxy-9-methyl-decatrienoic acid (EDA) structural moiety. The exact role of each enzyme, and of additional enzymes identified within the AF-toxin clusters have still to be determined. On the other hand, ACTTS1 to ACTTS4 are specific to the tangerine pathotype. The function of ACTTS3 is to elongate the polyketide chain portion of ACT-toxin that is unique to this toxin. The enoyl-reductase ACTTS2 might complement the missing enoyl-reductase (ER) domain in ACTTS3 in the synthesis of the polyketide portion of ACT-toxin. The roles of the nonribosomal peptide synthetases-related proteins ACTTS1 and ACTTS4 have also still not been elucidated. This is Abhydrolase domain-containing protein ACTT2 from Alternaria alternata (Alternaria rot fungus).